A 447-amino-acid polypeptide reads, in one-letter code: MTAHEVNFDGLVGLTHHYAGLSFGNEASTRHRFQVSNPRLAVKQGLLKMKALADAGFPQAVIPPHERPFIPALRQLGFTGSDEQILDKVARQAPRWLSSVSSASPMWVANAATVCPSADALDGKVHLTVANLNNKFHRALEAPVTEALLRAIFRDESQFSVHSALPQVALLGDEGAANHNRLGGEYGSAGVQLFVYGREEENEIRPARYPARQSREASEAVARLNQVNPQQVIFAQQNPEVIDQGVFHNDVIAVSNRQVLFCHEAAFARQKVLINQLRTRVDGFMAIEVPAGEVSVSDAVATYLFNSQLLSRNDGLMLLVLPRECQDHVGVWRYLNKLVAEDNPISAMQVFDLRESMANGGGPACLRLRVVLTEEERRAVNPAVMMNDALFTALNAWADRYYRDRLTAADLADPLLLREGREALDVLTRLLDLGSVYPFQQTGAADG.

Substrate is bound by residues 19–28 (AGLSFGNEAS), Asn-110, and 137–138 (HR). Residue Glu-174 is part of the active site. Arg-212 is a binding site for substrate. Residue His-248 is part of the active site. Residues Asp-250 and Asn-359 each coordinate substrate. Cys-365 serves as the catalytic Nucleophile.

The protein belongs to the succinylarginine dihydrolase family. As to quaternary structure, homodimer.

It catalyses the reaction N(2)-succinyl-L-arginine + 2 H2O + 2 H(+) = N(2)-succinyl-L-ornithine + 2 NH4(+) + CO2. Its pathway is amino-acid degradation; L-arginine degradation via AST pathway; L-glutamate and succinate from L-arginine: step 2/5. In terms of biological role, catalyzes the hydrolysis of N(2)-succinylarginine into N(2)-succinylornithine, ammonia and CO(2). This chain is N-succinylarginine dihydrolase, found in Salmonella typhimurium (strain LT2 / SGSC1412 / ATCC 700720).